A 160-amino-acid polypeptide reads, in one-letter code: Cytochrome b6-f complex subunit 4 (160 aa).

A run of 3 helical transmembrane segments spans residues 36-56, 95-115, and 131-151; these read LLYMFPVVILGTIACNVGLAV, LLGVLLMAAVPAGLLTVPFIE, and TVFLIGTVVAIWLGIGATLPI.

It belongs to the cytochrome b family. PetD subfamily. The 4 large subunits of the cytochrome b6-f complex are cytochrome b6, subunit IV (17 kDa polypeptide, petD), cytochrome f and the Rieske protein, while the 4 small subunits are petG, petL, petM and petN. The complex functions as a dimer.

Its subcellular location is the plastid. The protein resides in the chloroplast thylakoid membrane. In terms of biological role, component of the cytochrome b6-f complex, which mediates electron transfer between photosystem II (PSII) and photosystem I (PSI), cyclic electron flow around PSI, and state transitions. The polypeptide is Cytochrome b6-f complex subunit 4 (Coleochaete orbicularis (Charophycean green alga)).